Consider the following 277-residue polypeptide: Undecaprenyl-diphosphatase (277 aa).

The next 6 helical transmembrane spans lie at 47 to 67 (FNII…RGKI), 85 to 105 (ANLL…ADLI), 108 to 128 (WLFN…VMLW), 183 to 203 (AATE…AVYS), 218 to 238 (VFAV…RALL), and 249 to 269 (FAWY…FHLI).

Belongs to the UppP family.

The protein resides in the cell inner membrane. The catalysed reaction is di-trans,octa-cis-undecaprenyl diphosphate + H2O = di-trans,octa-cis-undecaprenyl phosphate + phosphate + H(+). Functionally, catalyzes the dephosphorylation of undecaprenyl diphosphate (UPP). Confers resistance to bacitracin. The protein is Undecaprenyl-diphosphatase of Pseudomonas aeruginosa (strain UCBPP-PA14).